The primary structure comprises 143 residues: Transmembrane protein 80 (143 aa).

Transmembrane regions (helical) follow at residues 22–42, 47–67, 88–108, and 122–142; these read LLCL…LLLV, VFTY…LMGI, LAAS…FLLW, and PLLA…AAFV.

The protein localises to the membrane. It is found in the cell projection. Its subcellular location is the cilium. This is Transmembrane protein 80 (TMEM80) from Bos taurus (Bovine).